Consider the following 226-residue polypeptide: Cytidylate kinase (226 aa).

An ATP-binding site is contributed by Gly10–Thr18.

The protein belongs to the cytidylate kinase family. Type 1 subfamily.

The protein localises to the cytoplasm. It catalyses the reaction CMP + ATP = CDP + ADP. The enzyme catalyses dCMP + ATP = dCDP + ADP. In Flavobacterium psychrophilum (strain ATCC 49511 / DSM 21280 / CIP 103535 / JIP02/86), this protein is Cytidylate kinase.